The sequence spans 381 residues: Peptidoglycan glycosyltransferase MrdB (381 aa).

10 consecutive transmembrane segments (helical) span residues 11–31, 40–60, 66–86, 99–119, 132–152, 156–176, 180–200, 263–283, 297–317, and 328–348; these read FDLLPFVFIIPLLVVSFLLIF, KQGVYYAIGFILFWIVFFIPF, WLFVFYWACVILLALVDFMGY, FISITLQPSEPVKIAILLLLA, YDWGMFLKLSFYICLPAALIL, DLGTALIVLIMGFGILLIVGL, VWLPLFIALLVASPIAYHFLH, FGFLGAMLLFAIYIGLSLHLF, IVALGISILIFVYSSVNIAMT, and LPLFSYGGSSFITFMILFGIL.

The protein belongs to the SEDS family. MrdB/RodA subfamily.

It localises to the cell inner membrane. It catalyses the reaction [GlcNAc-(1-&gt;4)-Mur2Ac(oyl-L-Ala-gamma-D-Glu-L-Lys-D-Ala-D-Ala)](n)-di-trans,octa-cis-undecaprenyl diphosphate + beta-D-GlcNAc-(1-&gt;4)-Mur2Ac(oyl-L-Ala-gamma-D-Glu-L-Lys-D-Ala-D-Ala)-di-trans,octa-cis-undecaprenyl diphosphate = [GlcNAc-(1-&gt;4)-Mur2Ac(oyl-L-Ala-gamma-D-Glu-L-Lys-D-Ala-D-Ala)](n+1)-di-trans,octa-cis-undecaprenyl diphosphate + di-trans,octa-cis-undecaprenyl diphosphate + H(+). The protein operates within cell wall biogenesis; peptidoglycan biosynthesis. In terms of biological role, peptidoglycan polymerase that is essential for cell wall elongation. The polypeptide is Peptidoglycan glycosyltransferase MrdB (Helicobacter pylori (strain ATCC 700392 / 26695) (Campylobacter pylori)).